The sequence spans 250 residues: Triosephosphate isomerase (250 aa).

10–12 (NWK) contributes to the substrate binding site. Histidine 96 functions as the Electrophile in the catalytic mechanism. The active-site Proton acceptor is the glutamate 168. Substrate is bound by residues glycine 174, serine 214, and 235–236 (GG).

This sequence belongs to the triosephosphate isomerase family. Homodimer.

It is found in the cytoplasm. It catalyses the reaction D-glyceraldehyde 3-phosphate = dihydroxyacetone phosphate. It participates in carbohydrate biosynthesis; gluconeogenesis. It functions in the pathway carbohydrate degradation; glycolysis; D-glyceraldehyde 3-phosphate from glycerone phosphate: step 1/1. Involved in the gluconeogenesis. Catalyzes stereospecifically the conversion of dihydroxyacetone phosphate (DHAP) to D-glyceraldehyde-3-phosphate (G3P). In Streptococcus suis (strain 98HAH33), this protein is Triosephosphate isomerase.